We begin with the raw amino-acid sequence, 444 residues long: Trigger factor (444 aa).

The 86-residue stretch at Gly-166–Ala-251 folds into the PPIase FKBP-type domain.

The protein belongs to the FKBP-type PPIase family. Tig subfamily.

The protein resides in the cytoplasm. It catalyses the reaction [protein]-peptidylproline (omega=180) = [protein]-peptidylproline (omega=0). Its function is as follows. Involved in protein export. Acts as a chaperone by maintaining the newly synthesized protein in an open conformation. Functions as a peptidyl-prolyl cis-trans isomerase. The chain is Trigger factor from Cereibacter sphaeroides (strain ATCC 17029 / ATH 2.4.9) (Rhodobacter sphaeroides).